The sequence spans 366 residues: Transcription factor MYB28 (366 aa).

2 consecutive HTH myb-type domains span residues 9–61 (GEGL…TNYL) and 62–116 (KPEI…KKRL). 2 DNA-binding regions (H-T-H motif) span residues 37 to 61 (WRDI…TNYL) and 89 to 112 (WSVI…NTHL). The segment at 124-170 (VTHKPLASSSNPTVDENLNSPNASSSDKQYSRSSSMPFLSRPPPSSC) is disordered. The segment covering 130–146 (ASSSNPTVDENLNSPNA) has biased composition (polar residues). Positions 147–158 (SSSDKQYSRSSS) are enriched in low complexity.

As to quaternary structure, can form complexes with MYC2, MYC3 or MYC4. In terms of tissue distribution, expressed in generative organs, mature leaves and trichomes.

Its subcellular location is the nucleus. Functionally, major regulator of short-chained aliphatic glucosinolates (GLSs) biosynthesis. Together with MYB29/HAG3 and MYB76/HAG2, promotes aliphatic glucosinolate biosynthesis but represses indolic glucosinolate biosynthesis. Prevents insect performance (e.g. lepidopteran insect Mamestra brassicae and Spodoptera exigua) by promoting glucosinolates. The chain is Transcription factor MYB28 (MYB28) from Arabidopsis thaliana (Mouse-ear cress).